The sequence spans 152 residues: Transcriptional regulator MraZ (152 aa).

SpoVT-AbrB domains follow at residues 5–52 (HSNR…PMPE) and 81–124 (ATEV…DQGR).

This sequence belongs to the MraZ family. In terms of assembly, forms oligomers.

The protein resides in the cytoplasm. It is found in the nucleoid. The sequence is that of Transcriptional regulator MraZ from Solidesulfovibrio magneticus (strain ATCC 700980 / DSM 13731 / RS-1) (Desulfovibrio magneticus).